Here is a 354-residue protein sequence, read N- to C-terminus: Uroporphyrinogen decarboxylase (354 aa).

Substrate is bound by residues 27-31, D77, Y154, T209, and H327; that span reads RQAGR.

The protein belongs to the uroporphyrinogen decarboxylase family. As to quaternary structure, homodimer.

The protein resides in the cytoplasm. It catalyses the reaction uroporphyrinogen III + 4 H(+) = coproporphyrinogen III + 4 CO2. It functions in the pathway porphyrin-containing compound metabolism; protoporphyrin-IX biosynthesis; coproporphyrinogen-III from 5-aminolevulinate: step 4/4. Catalyzes the decarboxylation of four acetate groups of uroporphyrinogen-III to yield coproporphyrinogen-III. This chain is Uroporphyrinogen decarboxylase, found in Enterobacter sp. (strain 638).